The chain runs to 366 residues: Ribosomal RNA large subunit methyltransferase M (366 aa).

Residues S188, 221–224 (CPGG), D240, D260, and D277 contribute to the S-adenosyl-L-methionine site. Residue K306 is the Proton acceptor of the active site.

Belongs to the class I-like SAM-binding methyltransferase superfamily. RNA methyltransferase RlmE family. RlmM subfamily. In terms of assembly, monomer.

Its subcellular location is the cytoplasm. It catalyses the reaction cytidine(2498) in 23S rRNA + S-adenosyl-L-methionine = 2'-O-methylcytidine(2498) in 23S rRNA + S-adenosyl-L-homocysteine + H(+). Its function is as follows. Catalyzes the 2'-O-methylation at nucleotide C2498 in 23S rRNA. This is Ribosomal RNA large subunit methyltransferase M from Salmonella newport (strain SL254).